A 157-amino-acid polypeptide reads, in one-letter code: Endoribonuclease YbeY (157 aa).

Zn(2+)-binding residues include His116, His120, and His126.

The protein belongs to the endoribonuclease YbeY family. Zn(2+) serves as cofactor.

Its subcellular location is the cytoplasm. Its function is as follows. Single strand-specific metallo-endoribonuclease involved in late-stage 70S ribosome quality control and in maturation of the 3' terminus of the 16S rRNA. The sequence is that of Endoribonuclease YbeY from Pseudarthrobacter chlorophenolicus (strain ATCC 700700 / DSM 12829 / CIP 107037 / JCM 12360 / KCTC 9906 / NCIMB 13794 / A6) (Arthrobacter chlorophenolicus).